Reading from the N-terminus, the 675-residue chain is tRNA 5-methylaminomethyl-2-thiouridine biosynthesis bifunctional protein MnmC (675 aa).

The tRNA (mnm(5)s(2)U34)-methyltransferase stretch occupies residues 1–245 (MANLPIQHAS…KREMLSGLLP (245 aa)). An FAD-dependent cmnm(5)s(2)U34 oxidoreductase region spans residues 271–675 (IGGGIASVLT…LLKGKPVTHD (405 aa)).

The protein in the N-terminal section; belongs to the methyltransferase superfamily. tRNA (mnm(5)s(2)U34)-methyltransferase family. This sequence in the C-terminal section; belongs to the DAO family. Requires FAD as cofactor.

The protein resides in the cytoplasm. The enzyme catalyses 5-aminomethyl-2-thiouridine(34) in tRNA + S-adenosyl-L-methionine = 5-methylaminomethyl-2-thiouridine(34) in tRNA + S-adenosyl-L-homocysteine + H(+). Functionally, catalyzes the last two steps in the biosynthesis of 5-methylaminomethyl-2-thiouridine (mnm(5)s(2)U) at the wobble position (U34) in tRNA. Catalyzes the FAD-dependent demodification of cmnm(5)s(2)U34 to nm(5)s(2)U34, followed by the transfer of a methyl group from S-adenosyl-L-methionine to nm(5)s(2)U34, to form mnm(5)s(2)U34. The chain is tRNA 5-methylaminomethyl-2-thiouridine biosynthesis bifunctional protein MnmC from Pectobacterium atrosepticum (strain SCRI 1043 / ATCC BAA-672) (Erwinia carotovora subsp. atroseptica).